A 956-amino-acid polypeptide reads, in one-letter code: UvrABC system protein A (956 aa).

Residue 33–40 (GLSGSGKS) participates in ATP binding. Residues 252-279 (CPYCGFSVGELEPRMFSFNSPFGACPTC) form a C4-type zinc finger. ABC transporter domains are found at residues 309 to 587 (WRPI…KNSI) and 607 to 936 (GNGL…KYLK). 639–646 (GVSGSGKS) is an ATP binding site. The C4-type zinc-finger motif lies at 738–764 (CEACKGDGIIKIEMHFLPDVYVPCEVC).

It belongs to the ABC transporter superfamily. UvrA family. As to quaternary structure, forms a heterotetramer with UvrB during the search for lesions.

The protein localises to the cytoplasm. In terms of biological role, the UvrABC repair system catalyzes the recognition and processing of DNA lesions. UvrA is an ATPase and a DNA-binding protein. A damage recognition complex composed of 2 UvrA and 2 UvrB subunits scans DNA for abnormalities. When the presence of a lesion has been verified by UvrB, the UvrA molecules dissociate. The chain is UvrABC system protein A from Listeria innocua serovar 6a (strain ATCC BAA-680 / CLIP 11262).